A 314-amino-acid polypeptide reads, in one-letter code: Coiled-coil domain-containing protein 92 (314 aa).

Coiled-coil stretches lie at residues 1 to 27 and 59 to 113; these read MAAT…HAST and DSSS…EKKY. 2 disordered regions span residues 153–193 and 251–314; these read LSSS…KKSL and ASDR…DRTV. Residues 176 to 186 show a composition bias toward basic and acidic residues; it reads PPKDKLPETPR. Ser192 bears the Phosphoserine mark. A compositionally biased stretch (basic residues) spans 266–280; it reads KPHKTHVGVAHRIHH.

As to quaternary structure, interacts with CEP164. Phosphorylated at Ser-192 by TTBK2.

The protein localises to the cytoplasm. It localises to the cytoskeleton. Its subcellular location is the microtubule organizing center. The protein resides in the centrosome. It is found in the centriole. Functionally, interferon-stimulated protein that plays a role in innate immunity. The polypeptide is Coiled-coil domain-containing protein 92 (Ccdc92) (Mus musculus (Mouse)).